A 218-amino-acid polypeptide reads, in one-letter code: MINLILLGLPGAGKGTASERIVDKYHLTHISTGDMFREAMANKTKVGLEAKSYIDKGNLVPDEVTAKLVEERLSQPDIKEGFILDGFPRTTVQAELLDGITKRLKKPLTNVIALEVDEDTLIKRLSARYMCKNCGATYNKLSKQPKVEGTCDRCGSHEFYQREDDKPEVVKNRLEVNEKMNAPLKDFYQKKGLLTVINGEQTPEKVFEDIDAVLSNNQ.

11-16 (GAGKGT) contributes to the ATP binding site. The tract at residues 31–60 (STGDMFREAMANKTKVGLEAKSYIDKGNLV) is NMP. AMP-binding positions include Thr32, Arg37, 58 to 60 (NLV), 86 to 89 (GFPR), and Gln93. The LID stretch occupies residues 127–165 (ARYMCKNCGATYNKLSKQPKVEGTCDRCGSHEFYQREDD). Position 128 (Arg128) interacts with ATP. Zn(2+)-binding residues include Cys131 and Cys134. 137–138 (TY) is a binding site for ATP. Residues Cys151 and Cys154 each contribute to the Zn(2+) site. The AMP site is built by Arg162 and Arg173. Gln201 is an ATP binding site.

Belongs to the adenylate kinase family. Monomer.

Its subcellular location is the cytoplasm. The catalysed reaction is AMP + ATP = 2 ADP. Its pathway is purine metabolism; AMP biosynthesis via salvage pathway; AMP from ADP: step 1/1. Its function is as follows. Catalyzes the reversible transfer of the terminal phosphate group between ATP and AMP. Plays an important role in cellular energy homeostasis and in adenine nucleotide metabolism. This is Adenylate kinase from Lactobacillus helveticus (strain DPC 4571).